A 63-amino-acid polypeptide reads, in one-letter code: MIFSELTTAEIETKVKALKEELFNLRLQLATGQLENPTRIREVRKAIARMKTVVREREIGINR.

This sequence belongs to the universal ribosomal protein uL29 family.

This is Large ribosomal subunit protein uL29 from Bacillus cereus (strain ATCC 14579 / DSM 31 / CCUG 7414 / JCM 2152 / NBRC 15305 / NCIMB 9373 / NCTC 2599 / NRRL B-3711).